A 182-amino-acid chain; its full sequence is Methyl-coenzyme M reductase operon protein C (182 aa).

In terms of assembly, MCR is composed of three subunits: alpha, beta, and gamma. The function of proteins C and D is not known.

The polypeptide is Methyl-coenzyme M reductase operon protein C (mcrC) (Methanococcus voltae).